We begin with the raw amino-acid sequence, 264 residues long: Thiazole synthase (264 aa).

The active-site Schiff-base intermediate with DXP is the Lys106. 1-deoxy-D-xylulose 5-phosphate-binding positions include Gly167, 193–194, and 215–216; these read AG and NT.

This sequence belongs to the ThiG family. In terms of assembly, homotetramer. Forms heterodimers with either ThiH or ThiS.

Its subcellular location is the cytoplasm. The enzyme catalyses [ThiS sulfur-carrier protein]-C-terminal-Gly-aminoethanethioate + 2-iminoacetate + 1-deoxy-D-xylulose 5-phosphate = [ThiS sulfur-carrier protein]-C-terminal Gly-Gly + 2-[(2R,5Z)-2-carboxy-4-methylthiazol-5(2H)-ylidene]ethyl phosphate + 2 H2O + H(+). The protein operates within cofactor biosynthesis; thiamine diphosphate biosynthesis. Its function is as follows. Catalyzes the rearrangement of 1-deoxy-D-xylulose 5-phosphate (DXP) to produce the thiazole phosphate moiety of thiamine. Sulfur is provided by the thiocarboxylate moiety of the carrier protein ThiS. In vitro, sulfur can be provided by H(2)S. This is Thiazole synthase from Xanthomonas axonopodis pv. citri (strain 306).